The sequence spans 327 residues: Ferredoxin--NADP reductase (327 aa).

FAD contacts are provided by Thr-18, Asp-37, Gln-45, Tyr-50, Ala-90, Phe-124, Asp-283, and Ser-324.

This sequence belongs to the ferredoxin--NADP reductase type 2 family. In terms of assembly, homodimer. FAD serves as cofactor.

The enzyme catalyses 2 reduced [2Fe-2S]-[ferredoxin] + NADP(+) + H(+) = 2 oxidized [2Fe-2S]-[ferredoxin] + NADPH. This Saccharopolyspora erythraea (strain ATCC 11635 / DSM 40517 / JCM 4748 / NBRC 13426 / NCIMB 8594 / NRRL 2338) protein is Ferredoxin--NADP reductase.